Consider the following 1080-residue polypeptide: MSNYYRRAHASSGSYRQPQEQPQYSRSGHYQYSNGHSHQQYSSQYNQRRRYNHNDGTRRRYNDDRPHSSNNASTRQYYATNNSQSGPYVNKKSDISSRRGMSQSRYSNSNVHNTLASSSGSLPTESALLLQQRPPSVLRYNTDNLKSKFHYFDPIKGEFFNKDKMLSWKATDKEFSETGYYVVKELQDGQFKFKIKHRHPEIKASDPRNENGIMTSGKVATHRKCRNSLILLPRISYDRYSLGPPPSCEIVVYPAQDSTTTNIQDISIKNYFKKYGEISHFEAFNDPNSALPLHVYLIKYASSDGKINDAAKAAFSAVRKHESSGCFIMGFKFEVILNKHSILNNIISKFVEINVKKLQKLQENLKKAKEKEAENEKAKELQGKDITLPKEPKVDTLSHSSGSEKRIPYDLLGVVNNRPVLHVSKIFVAKHRFCVEDFKYKLRGYRCAKFIDHPTGIYIIFNDIAHAQTCSNAESGNLTIMSRSRRIPILIKFHLILPRFQNRTRFNKSSSSSNSTNVPIKYESKEEFIEATAKQILKDLEKTLHVDIKKRLIGPTVFDALDHANFPELLAKRELKEKEKRQQIASKIAEDELKRKEEAKRDFDLFGLYGGYAKSNKRNLKRHNSLALDHTSLKRKKLSNGIKPMAHLLNEETDSKETTPLNDEGITRVSKEHDEEDENMTSSSSEEEEEEAPDKKFKSESEPTTPESDHLHGIKPLVPDQNGSSDVLDASSMYKPTATEIPEPVYPPEEYDLKYSQTLSSMDLQNAIKDEEDMLILKQLLSTYTPTVTPETSAALEYKIWQSRRKVLEEEKASDWQIELNGTLFDSELQPGSSFKAEGFRKIADKLKINYLPHRRRVHQPLNTVNIHNERNEYTPELCQREESSNKEPSDSVPQEVSSSRDNRASNRRFQQDIEAQKAAIGTESELLSLNQLNKRKKPVMFARSAIHNWGLYALDSIAAKEMIIEYVGERIRQPVAEMREKRYLKNGIGSSYLFRVDENTVIDATKKGGIARFINHCCDPNCTAKIIKVGGRRRIVIYALRDIAASEELTYDYKFEREKDDEERLPCLCGAPNCKGFLN.

3 disordered regions span residues 1-46 (MSNY…SQYN), 54-73 (NDGT…NNAS), and 78-121 (YATN…SSGS). Positions 1 to 230 (MSNYYRRAHA…THRKCRNSLI (230 aa)) are binds SWD2. Over residues 11 to 28 (SSGSYRQPQEQPQYSRSG) the composition is skewed to polar residues. The span at 29 to 46 (HYQYSNGHSHQQYSSQYN) shows a compositional bias: low complexity. The segment covering 54-67 (NDGTRRRYNDDRPH) has biased composition (basic and acidic residues). Composition is skewed to polar residues over residues 78–87 (YATNNSQSGP) and 99–121 (RGMS…SSGS). The tract at residues 230–569 (ILLPRISYDR…ALDHANFPEL (340 aa)) is binds RNA. Residues 356–569 (KKLQKLQENL…ALDHANFPEL (214 aa)) are binds SHG1. Residue Ser-625 is modified to Phosphoserine. The disordered stretch occupies residues 646 to 729 (AHLLNEETDS…DQNGSSDVLD (84 aa)). Residues 674-692 (DEEDENMTSSSSEEEEEEA) are compositionally biased toward acidic residues. Positions 693 to 712 (PDKKFKSESEPTTPESDHLH) are enriched in basic and acidic residues. Positions 762-938 (MDLQNAIKDE…SLNQLNKRKK (177 aa)) are binds SPP1. A contributes to RNA binding region spans residues 762–938 (MDLQNAIKDE…SLNQLNKRKK (177 aa)). The segment at 762–938 (MDLQNAIKDE…SLNQLNKRKK (177 aa)) is required for catalytic activity. Thr-875 carries the post-translational modification Phosphothreonine. 2 stretches are compositionally biased toward basic and acidic residues: residues 877 to 890 (ELCQ…KEPS) and 899 to 909 (SSRDNRASNRR). Residues 877–909 (ELCQREESSNKEPSDSVPQEVSSSRDNRASNRR) are disordered. Residues 904–909 (RASNRR) carry the RxxxRR motif motif. Residues 938 to 1055 (KPVMFARSAI…ASEELTYDYK (118 aa)) form the SET domain. Residue Tyr-1054 coordinates S-adenosyl-L-methionine. The Post-SET domain maps to 1064–1080 (ERLPCLCGAPNCKGFLN).

This sequence belongs to the class V-like SAM-binding methyltransferase superfamily. In terms of assembly, component of the Set1C/COMPASS complex which consists of SET1(2), BRE2(2), SPP1(2), SDC1(1), SHG1(1), SWD1(1), SWD2(1), and SWD3(1). Interacts with MEC3.

It is found in the nucleus. It localises to the chromosome. It catalyses the reaction L-lysyl(4)-[histone H3] + 3 S-adenosyl-L-methionine = N(6),N(6),N(6)-trimethyl-L-lysyl(4)-[histone H3] + 3 S-adenosyl-L-homocysteine + 3 H(+). It carries out the reaction N(6)-methyl-L-lysyl(4)-[histone H3] + S-adenosyl-L-methionine = N(6),N(6)-dimethyl-L-lysyl(4)-[histone H3] + S-adenosyl-L-homocysteine + H(+). The catalysed reaction is N(6),N(6)-dimethyl-L-lysyl(4)-[histone H3] + S-adenosyl-L-methionine = N(6),N(6),N(6)-trimethyl-L-lysyl(4)-[histone H3] + S-adenosyl-L-homocysteine + H(+). Its function is as follows. Catalytic component of the COMPASS (Set1C) complex that specifically mono-, di- and trimethylates histone H3 to form H3K4me1/2/3. Binds RNAs involved in chromosome segregation, splicing and transcriptional regulation; appears to bind transcripts both co- and post-transcriptionally and binding might negatively affect its histone methyltransferase activity. COMPASS recognizes ubiquitinated H2B on one face of the nucleosome which stimulates the methylation of H3 on the opposing face. Plays a role in telomere length maintenance and transcription elongation regulation. The polypeptide is Histone-lysine N-methyltransferase, H3 lysine-4 specific (Saccharomyces cerevisiae (strain ATCC 204508 / S288c) (Baker's yeast)).